The chain runs to 418 residues: AP-3 complex subunit mu-1 (418 aa).

The region spanning 176 to 417 (NNEAYFDVVE…VTKAGKFQVR (242 aa)) is the MHD domain.

It belongs to the adaptor complexes medium subunit family. As to quaternary structure, adaptor protein complex 3 (AP-3) is a heterotetramer composed of two large adaptins (delta-type subunit AP3D1 and beta-type subunit AP3B1 or AP3B2), a medium adaptin (mu-type subunit AP3M1 or AP3M2) and a small adaptin (sigma-type subunit APS1 or AP3S2). Interacts with AGAP1. AP-3 associates with the BLOC-1 complex.

Its subcellular location is the golgi apparatus. The protein localises to the cytoplasmic vesicle membrane. Its function is as follows. Part of the AP-3 complex, an adaptor-related complex which is not clathrin-associated. The complex is associated with the Golgi region as well as more peripheral structures. It facilitates the budding of vesicles from the Golgi membrane and may be directly involved in trafficking to lysosomes. In concert with the BLOC-1 complex, AP-3 is required to target cargos into vesicles assembled at cell bodies for delivery into neurites and nerve terminals. This is AP-3 complex subunit mu-1 (AP3M1) from Bos taurus (Bovine).